The chain runs to 99 residues: UPF0122 protein UU142 (99 aa).

Belongs to the UPF0122 family.

Functionally, might take part in the signal recognition particle (SRP) pathway. This is inferred from the conservation of its genetic proximity to ftsY/ffh. May be a regulatory protein. The protein is UPF0122 protein UU142 of Ureaplasma parvum serovar 3 (strain ATCC 700970).